The following is a 149-amino-acid chain: D-aminoacyl-tRNA deacylase (149 aa).

The short motif at 137-138 is the Gly-cisPro motif, important for rejection of L-amino acids element; sequence GP.

The protein belongs to the DTD family. In terms of assembly, homodimer.

Its subcellular location is the cytoplasm. The catalysed reaction is glycyl-tRNA(Ala) + H2O = tRNA(Ala) + glycine + H(+). The enzyme catalyses a D-aminoacyl-tRNA + H2O = a tRNA + a D-alpha-amino acid + H(+). Functionally, an aminoacyl-tRNA editing enzyme that deacylates mischarged D-aminoacyl-tRNAs. Also deacylates mischarged glycyl-tRNA(Ala), protecting cells against glycine mischarging by AlaRS. Acts via tRNA-based rather than protein-based catalysis; rejects L-amino acids rather than detecting D-amino acids in the active site. By recycling D-aminoacyl-tRNA to D-amino acids and free tRNA molecules, this enzyme counteracts the toxicity associated with the formation of D-aminoacyl-tRNA entities in vivo and helps enforce protein L-homochirality. The protein is D-aminoacyl-tRNA deacylase of Clostridium beijerinckii (strain ATCC 51743 / NCIMB 8052) (Clostridium acetobutylicum).